The chain runs to 289 residues: BTB/POZ domain-containing protein KCTD7 (289 aa).

Positions 1 to 42 (MVVVTGREPDSRHSDGAMSSSEAEDDFLEPATPTATQAGHGL) are disordered. A BTB domain is found at 53 to 141 (VPLNIGGAHF…YAIGPLLEQL (89 aa)).

Interacts with CUL3. In terms of tissue distribution, high expression in brain, particularly in post-mitotic neurons. Expressed in the mitral cells of the olfactory bulbs, the hippocampus, the deep layers of the cerebral cortex and Purkinje cells of the cerebellum. Not detected in astrocytes or microglial cells. Also expressed in heart, liver, spleen and kidney.

It localises to the cell membrane. The protein localises to the cytoplasm. Its subcellular location is the cytosol. May be involved in the control of excitability of cortical neurons. This chain is BTB/POZ domain-containing protein KCTD7 (Kctd7), found in Mus musculus (Mouse).